The following is a 96-amino-acid chain: Guanine nucleotide-binding protein alpha-9 subunit (96 aa).

The region spanning 2–96 (YFHSTAIILF…ISASLKMVGV (95 aa)) is the G-alpha domain. The G1 motif stretch occupies residues 9–16 (ILFLNKID). GTP contacts are provided by residues 13 to 16 (NKID) and Ala-69. The tract at residues 67-72 (TSATDT) is G2 motif.

This sequence belongs to the G-alpha family. As to quaternary structure, g proteins are composed of 3 units; alpha, beta and gamma. The alpha chain contains the guanine nucleotide binding site. As to expression, expressed in ASJ neurons.

In terms of biological role, guanine nucleotide-binding proteins (G proteins) are involved as modulators or transducers in various transmembrane signaling systems. Plays a role in innate immunity and maintaining survival in response to metabolites of E.coli. This might be by regulating the expression and signaling of genes such as lys-8, ins-7 and daf-28. Has a role in lifespan to promote longevity. The protein is Guanine nucleotide-binding protein alpha-9 subunit of Caenorhabditis elegans.